The sequence spans 781 residues: Putative UPF0313 protein YPO0674/y3502/YP_2990 (781 aa).

In terms of domain architecture, Radical SAM core spans 368-646; sequence AYDMIRFSIN…KALLRYHDPA (279 aa). Cys-382, Cys-386, and Cys-389 together coordinate [4Fe-4S] cluster. Residues 681–781 form a disordered region; the sequence is REARRALRHH…AGSRGKNRQH (101 aa). Residues 696-708 show a composition bias toward polar residues; sequence KHTSITRQRQPSN. Over residues 726 to 750 the composition is skewed to low complexity; it reads TSSAHSTSANQSTSANQSTSAAHST.

It belongs to the UPF0313 family. Requires [4Fe-4S] cluster as cofactor.

The sequence is that of Putative UPF0313 protein YPO0674/y3502/YP_2990 from Yersinia pestis.